The sequence spans 202 residues: 3-isopropylmalate dehydratase small subunit 2 (202 aa).

It belongs to the LeuD family. LeuD type 1 subfamily. In terms of assembly, heterodimer of LeuC and LeuD.

It catalyses the reaction (2R,3S)-3-isopropylmalate = (2S)-2-isopropylmalate. It participates in amino-acid biosynthesis; L-leucine biosynthesis; L-leucine from 3-methyl-2-oxobutanoate: step 2/4. Its function is as follows. Catalyzes the isomerization between 2-isopropylmalate and 3-isopropylmalate, via the formation of 2-isopropylmaleate. This Bordetella parapertussis (strain 12822 / ATCC BAA-587 / NCTC 13253) protein is 3-isopropylmalate dehydratase small subunit 2.